A 196-amino-acid chain; its full sequence is ATP-dependent Clp protease proteolytic subunit (196 aa).

S101 functions as the Nucleophile in the catalytic mechanism. H126 is an active-site residue.

Belongs to the peptidase S14 family. As to quaternary structure, component of the chloroplastic Clp protease core complex.

Its subcellular location is the plastid. It localises to the chloroplast stroma. The enzyme catalyses Hydrolysis of proteins to small peptides in the presence of ATP and magnesium. alpha-casein is the usual test substrate. In the absence of ATP, only oligopeptides shorter than five residues are hydrolyzed (such as succinyl-Leu-Tyr-|-NHMec, and Leu-Tyr-Leu-|-Tyr-Trp, in which cleavage of the -Tyr-|-Leu- and -Tyr-|-Trp bonds also occurs).. Cleaves peptides in various proteins in a process that requires ATP hydrolysis. Has a chymotrypsin-like activity. Plays a major role in the degradation of misfolded proteins. This chain is ATP-dependent Clp protease proteolytic subunit, found in Populus trichocarpa (Western balsam poplar).